The primary structure comprises 425 residues: Monoacylglycerol lipase ABHD2 (425 aa).

Residues 1-9 (MNAMMETSE) lie on the Cytoplasmic side of the membrane. A helical; Signal-anchor for type II membrane protein transmembrane segment spans residues 10-30 (LPAVFDGVKLAAVAAVLYVIV). Topologically, residues 31–425 (RCLNLKSPTA…DTELVEADLE (395 aa)) are extracellular. In terms of domain architecture, AB hydrolase-1 spans 128 to 382 (MVICPGIANH…HGGHLGFFEG (255 aa)). The N-linked (GlcNAc...) asparagine glycan is linked to Asn-136. Ser-207 (nucleophile) is an active-site residue. Residues Asp-345 and His-376 each act as charge relay system in the active site. N-linked (GlcNAc...) asparagine glycosylation is present at Asn-410.

Belongs to the AB hydrolase superfamily. AB hydrolase 4 family.

It is found in the cell membrane. The enzyme catalyses Hydrolyzes glycerol monoesters of long-chain fatty acids.. It catalyses the reaction an acetyl ester + H2O = an aliphatic alcohol + acetate + H(+). It carries out the reaction a triacylglycerol + H2O = a diacylglycerol + a fatty acid + H(+). The catalysed reaction is 2-(5Z,8Z,11Z,14Z-eicosatetraenoyl)-glycerol + H2O = glycerol + (5Z,8Z,11Z,14Z)-eicosatetraenoate + H(+). The enzyme catalyses a butanoate ester + H2O = an aliphatic alcohol + butanoate + H(+). It catalyses the reaction hexadecanoate ester + H2O = an aliphatic alcohol + hexadecanoate + H(+). With respect to regulation, acylglycerol lipase activity is activated upon binding to progesterone. In terms of biological role, progesterone-dependent acylglycerol lipase that catalyzes hydrolysis of endocannabinoid arachidonoylglycerol (AG) from cell membrane. Acts as a progesterone receptor: progesterone-binding activates the acylglycerol lipase activity, mediating degradation of 1-arachidonoylglycerol (1AG) and 2-arachidonoylglycerol (2AG) to glycerol and arachidonic acid (AA). Also displays an ester hydrolase activity against acetyl ester, butanoate ester and hexadecanoate ester. Plays a key role in sperm capacitation in response to progesterone by mediating degradation of 2AG, an inhibitor of the sperm calcium channel CatSper, leading to calcium influx via CatSper and sperm activation. May also play a role in smooth muscle cells migration. The sequence is that of Monoacylglycerol lipase ABHD2 (ABHD2) from Bos taurus (Bovine).